The chain runs to 301 residues: Mitochondrial ornithine transporter 1 (301 aa).

6 helical membrane passes run 5-25 (PAIQ…ACVL), 68-88 (SPAL…YGFC), 110-130 (AAAG…TELV), 168-188 (GFYH…FFFF), 207-227 (LGPI…WLAV), and 237-257 (IQVL…LSIV). Solcar repeat units follow at residues 7-91 (IQAA…CQQV), 104-197 (LSDL…SRSF), and 207-293 (LGPI…SRKL).

This sequence belongs to the mitochondrial carrier (TC 2.A.29) family. Expressed in the liver (at protein level).

It localises to the mitochondrion inner membrane. Its subcellular location is the mitochondrion membrane. The catalysed reaction is L-citrulline(in) + L-ornithine(out) + H(+)(in) = L-citrulline(out) + L-ornithine(in) + H(+)(out). The enzyme catalyses L-ornithine(in) + L-arginine(out) = L-ornithine(out) + L-arginine(in). It catalyses the reaction L-ornithine(out) + L-lysine(in) = L-ornithine(in) + L-lysine(out). It carries out the reaction L-ornithine(out) + H(+)(in) = L-ornithine(in) + H(+)(out). The catalysed reaction is L-lysine(out) + H(+)(in) = L-lysine(in) + H(+)(out). Its activity is regulated as follows. Inhibited by pyridoxal 5'-phosphate as well as by mercurials (mersalyl, p-chloromercuribenzene sulfonate, and mercuric chloride), N-ethylmaleimide and spermine. In terms of biological role, mitochondrial ornithine-citrulline antiporter. Catalyzes the exchange between cytosolic ornithine and mitochondrial citrulline plus an H(+), the proton compensates the positive charge of ornithine thus leading to an electroneutral transport. Plays a crucial role in the urea cycle, by connecting the cytosolic and the intramitochondrial reactions of the urea cycle. Lysine and arginine are also transported by the antiport mechanism. In addition, catalyzes an electroneutral exchange of ornithine or lysine for H(+), a reaction driven by the pH gradient across the inner membrane. This chain is Mitochondrial ornithine transporter 1 (Slc25a15), found in Rattus norvegicus (Rat).